The chain runs to 107 residues: Nucleoid-associated protein A1I_00660 (107 aa).

A disordered region spans residues Lys-81–Phe-107.

This sequence belongs to the YbaB/EbfC family. As to quaternary structure, homodimer.

Its subcellular location is the cytoplasm. It localises to the nucleoid. In terms of biological role, binds to DNA and alters its conformation. May be involved in regulation of gene expression, nucleoid organization and DNA protection. The sequence is that of Nucleoid-associated protein A1I_00660 from Rickettsia bellii (strain OSU 85-389).